Reading from the N-terminus, the 109-residue chain is Ig kappa chain V region 3374 (109 aa).

A framework-1 region spans residues 1–24; it reads ADIVMTQTPASVSAAVGGTVTINC. The tract at residues 25-35 is complementarity-determining-1; it reads QASQNIDSWLA. A framework-2 region spans residues 36–50; the sequence is WYQQKPGQPPKVLIY. The complementarity-determining-2 stretch occupies residues 51–57; it reads RTSTLAS. The framework-3 stretch occupies residues 58–89; that stretch reads GVPSRFKGSRSGTEFTLTISDLECADAATYYC. The segment at 90-98 is complementarity-determining-3; it reads QSYYSISSA. Positions 99–108 are framework-4; it reads FGGGTEVVVK.

This Oryctolagus cuniculus (Rabbit) protein is Ig kappa chain V region 3374.